Reading from the N-terminus, the 210-residue chain is Tumor protein D53 homolog (210 aa).

Residues 22–73 (VTDVDFTSMISEEEKEELKAELAKLEDEISTLRQVLAAKEKHLIEIKQKLGM) are a coiled coil. A compositionally biased stretch (polar residues) spans 185–197 (SSTAHASAQSSLA). The tract at residues 185–210 (SSTAHASAQSSLAGTRLPESEEELQC) is disordered.

It belongs to the TPD52 family. In terms of assembly, forms a homodimer or heterodimer with other members of the family.

The protein is Tumor protein D53 homolog (TPD52L1) of Gallus gallus (Chicken).